We begin with the raw amino-acid sequence, 82 residues long: Antitoxin MazE8 (82 aa).

As to quaternary structure, forms a complex with cognate toxin MazF8.

Functionally, antitoxin component of a type II toxin-antitoxin (TA) system. Its cognate toxin is MazF8. The polypeptide is Antitoxin MazE8 (mazE8) (Mycobacterium tuberculosis (strain ATCC 25618 / H37Rv)).